Reading from the N-terminus, the 204-residue chain is Leucyl/phenylalanyl-tRNA--protein transferase (204 aa).

This sequence belongs to the L/F-transferase family.

The protein localises to the cytoplasm. It carries out the reaction N-terminal L-lysyl-[protein] + L-leucyl-tRNA(Leu) = N-terminal L-leucyl-L-lysyl-[protein] + tRNA(Leu) + H(+). The catalysed reaction is N-terminal L-arginyl-[protein] + L-leucyl-tRNA(Leu) = N-terminal L-leucyl-L-arginyl-[protein] + tRNA(Leu) + H(+). The enzyme catalyses L-phenylalanyl-tRNA(Phe) + an N-terminal L-alpha-aminoacyl-[protein] = an N-terminal L-phenylalanyl-L-alpha-aminoacyl-[protein] + tRNA(Phe). Its function is as follows. Functions in the N-end rule pathway of protein degradation where it conjugates Leu, Phe and, less efficiently, Met from aminoacyl-tRNAs to the N-termini of proteins containing an N-terminal arginine or lysine. The protein is Leucyl/phenylalanyl-tRNA--protein transferase of Brucella melitensis biotype 2 (strain ATCC 23457).